We begin with the raw amino-acid sequence, 265 residues long: Hydroxyethylthiazole kinase (265 aa).

Residue Met44 coordinates substrate. 2 residues coordinate ATP: Lys120 and Ser166. Gly193 is a binding site for substrate.

It belongs to the Thz kinase family. It depends on Mg(2+) as a cofactor.

It catalyses the reaction 5-(2-hydroxyethyl)-4-methylthiazole + ATP = 4-methyl-5-(2-phosphooxyethyl)-thiazole + ADP + H(+). The protein operates within cofactor biosynthesis; thiamine diphosphate biosynthesis; 4-methyl-5-(2-phosphoethyl)-thiazole from 5-(2-hydroxyethyl)-4-methylthiazole: step 1/1. Catalyzes the phosphorylation of the hydroxyl group of 4-methyl-5-beta-hydroxyethylthiazole (THZ). The sequence is that of Hydroxyethylthiazole kinase from Methanosphaerula palustris (strain ATCC BAA-1556 / DSM 19958 / E1-9c).